The sequence spans 497 residues: Early growth response protein 1-A (497 aa).

Over residues 139–165 (SPSSAPSSSPSSSSSSSSSQSPPLSCS) the composition is skewed to low complexity. Disordered regions lie at residues 139–169 (SPSSAPSSSPSSSSSSSSSQSPPLSCSVQSN), 175–194 (YSAAPTFPNSSSEIFPDHSP), and 286–309 (PSRMRKYPNRPSKTPPHERPYGCP). C2H2-type zinc fingers lie at residues 306 to 330 (YGCPVESCDRRFSRSDELTRHIRIH), 336 to 358 (FQCRICMRNFSRSDHLTTHIRTH), and 364 to 386 (FACDICGRKFARSDERKRHTKIH). The segment at 377-441 (DERKRHTKIH…SYPSPVHSSF (65 aa)) is disordered. A compositionally biased stretch (basic residues) spans 381–391 (RHTKIHLRQKD). Residues 397 to 441 (ATPVSVASPVSSYSPSASTSYPSPVPTSYSSPVSSSYPSPVHSSF) show a composition bias toward low complexity.

This sequence belongs to the EGR C2H2-type zinc-finger protein family. As to expression, expressed in the presumptive mesoderm. In blastula embryos, expressed in the dorsal marginal zone, and at the onset of gastrulation expression is specific to the Spemann organizer. As gastrulation proceeds, expressed in a ring around the yolk plug. This expression is maintained in advanced gastrulae, with weak expression also extending into the dorsal midline. By the neurula stage, expression is excluded from the notochord. In late tailbud stages, expressed in two spots in the anterior forebrain, which are connected via a bridge of cells that also show expression.

It localises to the nucleus. It is found in the cytoplasm. Its function is as follows. Transcriptional regulator. Recognizes and binds to the DNA sequence 5'-GCG(T/G)GGGCG-3'(EGR-site) in the promoter region of target genes. Binds double-stranded target DNA, irrespective of the cytosine methylation status. Regulates the transcription of numerous target genes, and thereby plays an important role in regulating the response to growth factors, DNA damage, and ischemia. Plays a role in the regulation of cell survival, proliferation and cell death. Mediates responses to ischemia and hypoxia; regulates the expression of proteins that are involved in inflammatory processes. Plays a role in regulating the expression of circadian clock genes. The polypeptide is Early growth response protein 1-A (egr1-a) (Xenopus laevis (African clawed frog)).